The primary structure comprises 193 residues: dCTP deaminase, dUMP-forming (193 aa).

DCTP contacts are provided by residues 101–106, aspartate 119, 127–129, glutamine 148, tyrosine 162, and glutamine 174; these read KSSLGR and TLE. Glutamate 129 acts as the Proton donor/acceptor in catalysis. The disordered stretch occupies residues 160–193; sequence TPYGSGSLGSKYQGQRGPTPSKGYLNFSSEQDSD. Over residues 167–177 the composition is skewed to polar residues; the sequence is LGSKYQGQRGP.

It belongs to the dCTP deaminase family. In terms of assembly, homotrimer.

The enzyme catalyses dCTP + 2 H2O = dUMP + NH4(+) + diphosphate. It participates in pyrimidine metabolism; dUMP biosynthesis; dUMP from dCTP: step 1/1. Functionally, bifunctional enzyme that catalyzes both the deamination of dCTP to dUTP and the hydrolysis of dUTP to dUMP without releasing the toxic dUTP intermediate. The sequence is that of dCTP deaminase, dUMP-forming from Corynebacterium efficiens (strain DSM 44549 / YS-314 / AJ 12310 / JCM 11189 / NBRC 100395).